The chain runs to 364 residues: tRNA(Met) cytidine acetate ligase (364 aa).

ATP-binding positions include 7–20 (IAEFNPFHNGHKYL), Gly96, Asn152, and Arg175.

The protein belongs to the TmcAL family.

It is found in the cytoplasm. It carries out the reaction cytidine(34) in elongator tRNA(Met) + acetate + ATP = N(4)-acetylcytidine(34) in elongator tRNA(Met) + AMP + diphosphate. In terms of biological role, catalyzes the formation of N(4)-acetylcytidine (ac(4)C) at the wobble position of elongator tRNA(Met), using acetate and ATP as substrates. First activates an acetate ion to form acetyladenylate (Ac-AMP) and then transfers the acetyl group to tRNA to form ac(4)C34. In Streptococcus sanguinis (strain SK36), this protein is tRNA(Met) cytidine acetate ligase.